The chain runs to 206 residues: IMPACT family member HI_0722 (206 aa).

Belongs to the IMPACT family.

This chain is IMPACT family member HI_0722, found in Haemophilus influenzae (strain ATCC 51907 / DSM 11121 / KW20 / Rd).